The following is a 121-amino-acid chain: LOB domain-containing protein 24 (121 aa).

One can recognise an LOB domain in the interval 4-105; the sequence is KRCAACKYLR…NELAKTQAEI (102 aa).

The protein belongs to the LOB domain-containing protein family.

The protein is LOB domain-containing protein 24 (LBD24) of Arabidopsis thaliana (Mouse-ear cress).